Consider the following 451-residue polypeptide: Exodeoxyribonuclease 7 large subunit (451 aa).

Belongs to the XseA family. Heterooligomer composed of large and small subunits.

Its subcellular location is the cytoplasm. It carries out the reaction Exonucleolytic cleavage in either 5'- to 3'- or 3'- to 5'-direction to yield nucleoside 5'-phosphates.. Bidirectionally degrades single-stranded DNA into large acid-insoluble oligonucleotides, which are then degraded further into small acid-soluble oligonucleotides. The sequence is that of Exodeoxyribonuclease 7 large subunit from Neisseria meningitidis serogroup C / serotype 2a (strain ATCC 700532 / DSM 15464 / FAM18).